The primary structure comprises 407 residues: MKYDNLLDRFIKYVKVNTRSDPDSETTPSTESQEAFALTILKPEMEAIGLQDVHYNPVNGYLIGTLPANNPTLTRKIGFIAHMDTADFNAENVNPQIIDNYQGGDITLGSSNYKLDPKAFPNLNNYIGQTLITTDGTTLLGADDKSGIAEIMTAIEFLTSQPQIEHCDIKVAFGPDEEIGVGADKFEVADFEVDFAYTMDGGPLGELQYETFSAAALEVTFLGRNVHPGTAKDQMINALQLAIDFHEKLPAKERPEYTDGYQGFYHLTGLTGTVEEARASYIIRDFEEASFEARKVKVENIAQSMNAQLGTKRVLVELNDQYYNMKKVIEKDMTAIELAKEVMEELAIKPVIEPIRGGTDGSKISFMGIPTPNIFAGGENMHGRFEFVSLQTMERAVDVIIGLVCKA.

H82 serves as a coordination point for Zn(2+). Residue D84 is part of the active site. Residue D143 coordinates Zn(2+). The active-site Proton acceptor is the E177. Zn(2+)-binding residues include E178, D200, and H382.

The protein belongs to the peptidase M20B family. Requires Zn(2+) as cofactor.

The protein localises to the cytoplasm. The enzyme catalyses Release of the N-terminal residue from a tripeptide.. In terms of biological role, cleaves the N-terminal amino acid of tripeptides. The chain is Peptidase T from Streptococcus pyogenes serotype M2 (strain MGAS10270).